Here is a 429-residue protein sequence, read N- to C-terminus: Enolase (429 aa).

Gln-163 contacts (2R)-2-phosphoglycerate. Catalysis depends on Glu-205, which acts as the Proton donor. Mg(2+) contacts are provided by Asp-242, Glu-285, and Asp-312. (2R)-2-phosphoglycerate contacts are provided by Lys-337, Arg-366, Ser-367, and Lys-388. Lys-337 serves as the catalytic Proton acceptor.

This sequence belongs to the enolase family. It depends on Mg(2+) as a cofactor.

Its subcellular location is the cytoplasm. It is found in the secreted. It localises to the cell surface. It catalyses the reaction (2R)-2-phosphoglycerate = phosphoenolpyruvate + H2O. It functions in the pathway carbohydrate degradation; glycolysis; pyruvate from D-glyceraldehyde 3-phosphate: step 4/5. Catalyzes the reversible conversion of 2-phosphoglycerate (2-PG) into phosphoenolpyruvate (PEP). It is essential for the degradation of carbohydrates via glycolysis. The protein is Enolase of Aromatoleum aromaticum (strain DSM 19018 / LMG 30748 / EbN1) (Azoarcus sp. (strain EbN1)).